The primary structure comprises 308 residues: Taste receptor type 2 member 107 (308 aa).

Topologically, residues 1–7 (MLSAAEG) are extracellular. The helical transmembrane segment at 8 to 28 (ILLCVVTSEAVLGVLGDTFIA) threads the bilayer. The Cytoplasmic portion of the chain corresponds to 29 to 43 (LANCMEYAKNKKLSK). Residues 44–64 (IGFILIGLAISRIGVVWIIIL) form a helical membrane-spanning segment. The Extracellular segment spans residues 65-94 (QGYMQVFFPHILTFGNITEYITYIWVFLNH). The N-linked (GlcNAc...) asparagine glycan is linked to Asn80. A helical membrane pass occupies residues 95–115 (LSVWFATNLNILYFLKIANFS). Residues 116–127 (NSVFLWLKSRVR) are Cytoplasmic-facing. A helical membrane pass occupies residues 128–148 (VVFIFLSGCLLTSWLLCFPQF). Topologically, residues 149-180 (SKMLNNSKMYWGNTSWLQQQKNVFLINQSLTN) are extracellular. Residues Asn153, Asn161, and Asn175 are each glycosylated (N-linked (GlcNAc...) asparagine). Residues 181–201 (LGIFFFIIVSLITCFLLIVFL) form a helical membrane-spanning segment. At 202 to 232 (WRHIRQMHSDGSGLRDLNTEAHVKAMRVLIS) the chain is on the cytoplasmic side. The chain crosses the membrane as a helical span at residues 233-253 (FAVLFILHFVGLSIQVLCFFL). Residues 254–258 (PQNNL) are Extracellular-facing. The helical transmembrane segment at 259–279 (LFITGLIATCLYPCGHSIILI) threads the bilayer. Residues 280–308 (LGNKQLKQASLKALQHLTCCETKRNLSVT) lie on the Cytoplasmic side of the membrane.

It belongs to the G-protein coupled receptor T2R family.

It localises to the membrane. Its function is as follows. Putative taste receptor which may play a role in the perception of bitterness. The protein is Taste receptor type 2 member 107 of Rattus norvegicus (Rat).